Here is a 351-residue protein sequence, read N- to C-terminus: GDSL esterase/lipase At3g14820 (351 aa).

The N-terminal stretch at 1–22 is a signal peptide; the sequence is MDLHLIGFLLWFFVVQVTTSSA. Asparagine 25 carries an N-linked (GlcNAc...) asparagine glycan. Residue serine 39 is the Nucleophile of the active site. Active-site residues include aspartate 325 and histidine 328.

It belongs to the 'GDSL' lipolytic enzyme family.

It is found in the secreted. The protein is GDSL esterase/lipase At3g14820 of Arabidopsis thaliana (Mouse-ear cress).